The chain runs to 398 residues: Phosphopentomutase (398 aa).

6 residues coordinate Mn(2+): Asp-13, Asp-290, His-295, Asp-331, His-332, and His-343.

Belongs to the phosphopentomutase family. Mn(2+) serves as cofactor.

It localises to the cytoplasm. The catalysed reaction is 2-deoxy-alpha-D-ribose 1-phosphate = 2-deoxy-D-ribose 5-phosphate. The enzyme catalyses alpha-D-ribose 1-phosphate = D-ribose 5-phosphate. The protein operates within carbohydrate degradation; 2-deoxy-D-ribose 1-phosphate degradation; D-glyceraldehyde 3-phosphate and acetaldehyde from 2-deoxy-alpha-D-ribose 1-phosphate: step 1/2. Functionally, isomerase that catalyzes the conversion of deoxy-ribose 1-phosphate (dRib-1-P) and ribose 1-phosphate (Rib-1-P) to deoxy-ribose 5-phosphate (dRib-5-P) and ribose 5-phosphate (Rib-5-P), respectively. This chain is Phosphopentomutase, found in Clostridium tetani (strain Massachusetts / E88).